The chain runs to 626 residues: Phosphomethylpyrimidine synthase (626 aa).

A compositionally biased stretch (basic and acidic residues) spans 92-106 (AREVKPEDNGLKGPD). Residues 92-117 (AREVKPEDNGLKGPDRSAGVPPFPNV) form a disordered region. Substrate contacts are provided by residues Asn219, Met248, Tyr277, His313, 333–335 (SRG), 374–377 (DGLR), and Glu413. His417 serves as a coordination point for Zn(2+). Tyr440 contacts substrate. Residue His481 participates in Zn(2+) binding. [4Fe-4S] cluster contacts are provided by Cys561, Cys564, and Cys569.

The protein belongs to the ThiC family. Homodimer. [4Fe-4S] cluster is required as a cofactor.

It carries out the reaction 5-amino-1-(5-phospho-beta-D-ribosyl)imidazole + S-adenosyl-L-methionine = 4-amino-2-methyl-5-(phosphooxymethyl)pyrimidine + CO + 5'-deoxyadenosine + formate + L-methionine + 3 H(+). The protein operates within cofactor biosynthesis; thiamine diphosphate biosynthesis. Functionally, catalyzes the synthesis of the hydroxymethylpyrimidine phosphate (HMP-P) moiety of thiamine from aminoimidazole ribotide (AIR) in a radical S-adenosyl-L-methionine (SAM)-dependent reaction. In Novosphingobium aromaticivorans (strain ATCC 700278 / DSM 12444 / CCUG 56034 / CIP 105152 / NBRC 16084 / F199), this protein is Phosphomethylpyrimidine synthase.